A 1437-amino-acid polypeptide reads, in one-letter code: MSLSENEQFRVLLEQIDLLDNAELKDGSIKDLTVHSNSKRWTFSFEFNDILPLQIFVEFHHQLVNTFGSIAQIDFSIDTINKNNVATHATDYWDWIIKNSGIQSSLLQVLCDKSIPEFKDGQLVVKVDNQITKNFLNDDVLQTLSNTYQKVGFGPIKIKPTIDDNTAQERLQAYHEEKIKRDQAIVQKATEAIKKAESKKKASDKAMPEFNGKVQMGKPINGKDNIVQLRDITQEERSVSIEGYIFDAEVKTLRSERQLLIFKVTDYTSSITIKKFSRNEADEQLFSAIKKGLWVRVRGSIQEDSFMKDLTMNAYDIMEVDHADRQDTATDKRVELHLHTNMSTMDATNGISDLVGQAAKWGHPAVAVTDHAGLQAFPEAHAAGKKSGIKTLFGVEANLVDDGVPIGYNSEHCPLKGGKYVIFDVETTGLSAIYDKVIELSAVKMENGNVIDQFEEFIDPGFPLSETTINLTSITDEMVRGSMSEKEVFTKFREFYEDAIIVGHNVTFDIGFMNTGYLRHGMEEIKNPIIDTLTLARFLYPTLKGYRLNTLAKKFGVALEHHHRAIYDSETTGHLCYLFLKDAEERYGIEYHDQLNDHMTENEAYKHARPSHAILIAKTQAGLKNLFKLVSMSNVKYYYRVPRIPRSELEKLREGIIVGSACSSGDVFTAMMQKGYADARRKAKFYDYLEVMPKPVYQPLIEQELVSDNKKLEEIIANIVKLGEDLDIPVVATGDVHYLNPQDYIYRKILINSQGGANPLNRSELPDVHFRTTDEMLEDFSFLGPEVAHKIVVENSNKIADSVDDGISPVKDKLYTPKMPGAEDRIKQLSMDRAHALYGEVLPEIVQERLDKELTSIIGNGFSVIYLIAQRLVHKSNKDGYLVGSRGSVGSSFVATMSGITEVNPLPPHYRCPKCQYSFFYTKGEYGSGYDLPDKECPECGTWMIGDGQDIPFETFLGFKGDKVPDIDLNFSGDYQPIAHNYMQVLFGKDNVFRAGTIGTVADKTAFGYVKAYERDTNQHLRGAEIERLAKGATGVKRTTGQHPAGILIVPDYMDVYDFSPIQYPADDQTAAWETTHFDFHSIHDNILKMDILGHDDPTMIRKLQDLSGIDPETIPTDDPGVMKIFSGPEVLGVDENQIQSKTGTLGIPEFGTRFVRGMLEETHPTSYSELLQISGLSHGTDVWLGNAEELIKAGTVTLKEVIGCRDNIMMDLIHYGLDSQSSFQIMESVRKGKGIPEGYEDKMRAANVPDWYIESCGKIKYMFPRAHASAYVLMALRIAYFKVYYPLVYYAAYFTVRADDFDIVSMARGKESLKNRMQEINDKGNDASTKEKNLLTVLELANEMLERGFEFKMIDIEKSDAEEWLIEGKSLIAPFNALPGLGLNVAKQIVAARADKPFLSKEDLSKRGHVSQTLIDFMTENNVLSELPDENQLSLF.

In terms of domain architecture, Exonuclease spans 420 to 576 (YVIFDVETTG…YDSETTGHLC (157 aa)).

Belongs to the DNA polymerase type-C family. PolC subfamily.

The protein localises to the cytoplasm. It carries out the reaction DNA(n) + a 2'-deoxyribonucleoside 5'-triphosphate = DNA(n+1) + diphosphate. Its function is as follows. Required for replicative DNA synthesis. This DNA polymerase also exhibits 3' to 5' exonuclease activity. The sequence is that of DNA polymerase III PolC-type from Pediococcus pentosaceus (strain ATCC 25745 / CCUG 21536 / LMG 10740 / 183-1w).